Here is a 564-residue protein sequence, read N- to C-terminus: Kelch-like protein 12 (564 aa).

The BTB domain maps to 29–96; sequence CDITLRVEGT…VYTETVLVTV (68 aa). Residues 131–232 form the BACK domain; it reads CLGIRDFAET…LTPRYITDVI (102 aa). Kelch repeat units lie at residues 278–325, 327–375, 376–422, 423–469, 471–516, and 518–563; these read VLLV…ALND, VYVI…TLGD, MIYV…VASG, LIYC…LLND, IYVV…VLRG, and LYAI…VLRE.

As to quaternary structure, component of the BCR(KLHL12) E3 ubiquitin ligase complex.

The protein localises to the cytoplasmic vesicle. It is found in the COPII-coated vesicle. The protein operates within protein modification; protein ubiquitination. Substrate-specific adapter of a BCR (BTB-CUL3-RBX1) E3 ubiquitin ligase complex that acts as a negative regulator of Wnt signaling pathway and ER-Golgi transport. The BCR(KLHL12) complex is involved in ER-Golgi transport by regulating the size of COPII coats, thereby playing a key role in collagen export, which is required for embryonic stem (ES) cells division. Negatively regulates the Wnt signaling pathway, possibly via the targeted ubiquitination and subsequent proteolysis of dvl2 and dvl3. Regulates convergent-extension movements during early embryonic development. The sequence is that of Kelch-like protein 12 (klhl12) from Danio rerio (Zebrafish).